Consider the following 157-residue polypeptide: Peptide methionine sulfoxide reductase MsrB (157 aa).

One can recognise a MsrB domain in the interval Asp-14 to Leu-137. The Nucleophile role is filled by Cys-126.

The protein belongs to the MsrB Met sulfoxide reductase family.

The catalysed reaction is L-methionyl-[protein] + [thioredoxin]-disulfide + H2O = L-methionyl-(R)-S-oxide-[protein] + [thioredoxin]-dithiol. The protein is Peptide methionine sulfoxide reductase MsrB of Deinococcus radiodurans (strain ATCC 13939 / DSM 20539 / JCM 16871 / CCUG 27074 / LMG 4051 / NBRC 15346 / NCIMB 9279 / VKM B-1422 / R1).